Consider the following 199-residue polypeptide: Recombination protein RecR (199 aa).

A C4-type zinc finger spans residues 57-72 (CNLCNNFSEQEICPLC). The Toprim domain maps to 80-175 (TLLCIVEMPS…QVSRIARGLP (96 aa)).

The protein belongs to the RecR family.

Functionally, may play a role in DNA repair. It seems to be involved in an RecBC-independent recombinational process of DNA repair. It may act with RecF and RecO. The polypeptide is Recombination protein RecR (Methylobacillus flagellatus (strain ATCC 51484 / DSM 6875 / VKM B-1610 / KT)).